A 517-amino-acid polypeptide reads, in one-letter code: Transcription factor MTB3 (517 aa).

Positions 290–331 (GNSSNGYRSDEGEGKLYKEELDERKPRKRGRKPANGREEALN) are disordered. Over residues 297-314 (RSDEGEGKLYKEELDERK) the composition is skewed to basic and acidic residues. Residues 327–340 (EEALNHVEAERQRR) form a basic motif; degenerate region. Positions 327 to 376 (EEALNHVEAERQRREKLNQRFYALRAVVPNISKMDKASLLGDAIAYITDL) constitute a bHLH domain. Positions 341–376 (EKLNQRFYALRAVVPNISKMDKASLLGDAIAYITDL) are helix-loop-helix motif.

Its subcellular location is the nucleus. Functionally, transcription factor that negatively regulates jasmonate (JA) signaling. Negatively regulates JA-dependent response to wounding, JA-induced expression of defense genes, JA-dependent responses against herbivorous insects, and JA-dependent resistance against Botrytis cinerea infection. Plays a positive role in resistance against the bacterial pathogen Pseudomonas syringae pv tomato DC3000. The protein is Transcription factor MTB3 of Solanum lycopersicum (Tomato).